The chain runs to 280 residues: Four and a half LIM domains protein 1 (280 aa).

S2 is modified (N-acetylserine). K4 carries the post-translational modification N6-acetyllysine. Residues 7 to 31 form a C4-type zinc finger; that stretch reads CHYCRDPLQGKKYVQKDGRHCCLKC. LIM zinc-binding domains lie at 40 to 92, 101 to 153, 162 to 212, and 221 to 276; these read CVDC…CNKC, CKGC…CVTC, CVKC…CVDC, and CAGC…CPDC. K86 is covalently cross-linked (Glycyl lysine isopeptide (Lys-Gly) (interchain with G-Cter in SUMO2)).

Isoform 1 seems to be most abundant in each tissue and isoform 2 much less abundant. Isoform 1 is highly expressed in skeletal muscle and lung, and to a lesser extent in heart, brain and kidney. Isoform 2 was found in brain, lung kidney and genital organs.

It is found in the cytoplasm. It localises to the nucleus. In terms of biological role, may have an involvement in muscle development or hypertrophy. Isoform 2 binds to RBP-J and plays a negative regulatory role in the RBP-J-mediated transcription in mammalian systems. The sequence is that of Four and a half LIM domains protein 1 (Fhl1) from Mus musculus (Mouse).